A 461-amino-acid polypeptide reads, in one-letter code: MGTPHLQGFLLLFPLLLRLHGASAGSLHSPGLSECFQVNGADYRGHQNYTGPRGAGRPCLFWDQTQQHSYSSASDPQGRWGLGAHNFCRNPDGDVQPWCYVAETEEGIYWRYCDIPTCHMPGYLGCFVDSGAPPALSGPSGTSTKLTVQVCLRFCRMKGYQLAGVEAGYACFCGSESDLARGRPAPATDCDQICFGHPGQLCGGDGRLGIYEVSVGSCQGNWSAPQGVIYSPDFPDEYGPDRNCSWVLGQLGAVLELTFRLFELADSRDRLELRDVSSGNLLRAFDGAHPPPPGPLRLRTAALLLTFRSDARGHAQGFALTYRGLQDTVEGRASPEDSTESLAGDPDGANASCSPKPGAAQASIGARVFSTVTAFSVLLLLLLSLLRLLRRRSCLLAPGKGSLAMGPSRGPGRSWAVWYRRPRGVALPCPPGDSQAEGPAAGYRPLSASSQSSLRSLVSAL.

The first 24 residues, 1–24, serve as a signal peptide directing secretion; it reads MGTPHLQGFLLLFPLLLRLHGASA. Residues 25–363 are Extracellular-facing; the sequence is GSLHSPGLSE…SPKPGAAQAS (339 aa). In terms of domain architecture, Kringle spans 34 to 118; the sequence is ECFQVNGADY…YWRYCDIPTC (85 aa). Intrachain disulfides connect cysteine 35-cysteine 118, cysteine 59-cysteine 99, and cysteine 88-cysteine 113. A glycan (N-linked (GlcNAc...) asparagine) is linked at asparagine 48. Positions 120–214 constitute a WSC domain; that stretch reads MPGYLGCFVD…DGRLGIYEVS (95 aa). An intrachain disulfide couples cysteine 218 to cysteine 244. The 108-residue stretch at 218–325 folds into the CUB domain; that stretch reads CQGNWSAPQG…QGFALTYRGL (108 aa). N-linked (GlcNAc...) asparagine glycosylation is found at asparagine 221, asparagine 243, and asparagine 350. Positions 329 to 357 are disordered; the sequence is VEGRASPEDSTESLAGDPDGANASCSPKP. A helical membrane pass occupies residues 364–386; that stretch reads IGARVFSTVTAFSVLLLLLLSLL. Residues 387–461 lie on the Cytoplasmic side of the membrane; the sequence is RLLRRRSCLL…SSLRSLVSAL (75 aa). The interval 429–452 is disordered; that stretch reads CPPGDSQAEGPAAGYRPLSASSQS.

In terms of assembly, interacts with ERLEC1. Forms a ternary complex with DKK1 and LRP6.

It localises to the membrane. Receptor for Dickkopf proteins. Cooperates with DKK1/2 to inhibit Wnt/beta-catenin signaling by promoting the endocytosis of Wnt receptors LRP5 and LRP6. Plays a role in limb development; attenuates Wnt signaling in the developing limb to allow normal limb patterning and can also negatively regulate bone formation. The polypeptide is Kremen protein 2 (Kremen2) (Mus musculus (Mouse)).